The primary structure comprises 525 residues: Ent-kaurene oxidase (525 aa).

Residues 31-51 (VHWLIYVAFGAWLCSYVIHVL) traverse the membrane as a helical segment. Position 466 (cysteine 466) interacts with heme.

This sequence belongs to the cytochrome P450 family. Heme is required as a cofactor.

It is found in the membrane. The enzyme catalyses ent-kaur-16-ene + 3 reduced [NADPH--hemoprotein reductase] + 3 O2 = ent-kaur-16-en-19-oate + 3 oxidized [NADPH--hemoprotein reductase] + 4 H2O + 4 H(+). The protein operates within plant hormone biosynthesis; gibberellin biosynthesis. Catalyzes three successive oxidations of the 4-methyl group of ent-kaurene giving kaurenoic acid, a key step in gibberellin (GA) biosynthesis. The polypeptide is Ent-kaurene oxidase (CYP503A1) (Fusarium fujikuroi (Bakanae and foot rot disease fungus)).